The sequence spans 968 residues: Pumilio homolog 1 (968 aa).

Disordered regions lie at residues 1–25 (MIPELGRRPMHRGNEDSSFGDDYEK) and 138–171 (NNVLGGVGDRRKVNDNRSLFSMPPGFEGEKTGAS). Ser-194 is subject to Phosphoserine. Disordered regions lie at residues 204 to 240 (GHGHPVAQQPSRPASRNTFDENVDSNNNLSPSASQGI), 260 to 303 (GTPD…VTSG), and 360 to 382 (KSDQAHKATGSLRNSQLRGPHGS). 2 stretches are compositionally biased toward polar residues: residues 211 to 220 (QQPSRPASRN) and 227 to 238 (DSNNNLSPSASQ). At Thr-261 the chain carries Phosphothreonine. Over residues 291-303 (TSNQSPFNGVTSG) the composition is skewed to polar residues. In terms of domain architecture, PUM-HD spans 610 to 950 (FGSSMLEEFK…HVVARIEKLV (341 aa)). Pumilio repeat units lie at residues 630–665 (EIAGHVVEFSSDQYGSRFIQQKLETATTDEKNMVYE), 666–701 (EIMPQALVLMTDVFGNYVIQKFFEHGLPPQRRELAE), 702–737 (KLFDHVLPLSLQMYGCRVIQKAIEVVDLDQKIKMVK), 738–773 (ELDGHVMRCVRDQNGNHVVQKCIECVPEENIEFIIS), 774–810 (TFFGHVVTLSTHPYGCRVIQRVLEHCHDPDTQSKVME), 811–846 (EILSTVSMLAQDQYGNYVVQHVLEHGKPDERTVIIK), 847–882 (ELAGKIVQMSQQKFASNVVEKCLTFGGPEERELLVN), and 883–924 (EMLG…LILT).

The protein localises to the cytoplasm. Sequence-specific RNA-binding protein that regulates translation and mRNA stability by binding the 3'-UTR of target mRNAs. Binds the APUM-binding elements (APBEs) in the 3'-UTR mRNA sequence of CLV1, PNH, WUS and FAS2. This Arabidopsis thaliana (Mouse-ear cress) protein is Pumilio homolog 1 (APUM1).